A 138-amino-acid chain; its full sequence is Putative pre-16S rRNA nuclease (138 aa).

Belongs to the YqgF nuclease family.

The protein resides in the cytoplasm. Functionally, could be a nuclease involved in processing of the 5'-end of pre-16S rRNA. This is Putative pre-16S rRNA nuclease from Polaromonas sp. (strain JS666 / ATCC BAA-500).